The sequence spans 159 residues: ATP synthase subunit b 2 (159 aa).

Residues 1 to 21 (MDATFWAFIALVIFVAIVVYM) form a helical membrane-spanning segment.

This sequence belongs to the ATPase B chain family. In terms of assembly, F-type ATPases have 2 components, F(1) - the catalytic core - and F(0) - the membrane proton channel. F(1) has five subunits: alpha(3), beta(3), gamma(1), delta(1), epsilon(1). F(0) has three main subunits: a(1), b(2) and c(10-14). The alpha and beta chains form an alternating ring which encloses part of the gamma chain. F(1) is attached to F(0) by a central stalk formed by the gamma and epsilon chains, while a peripheral stalk is formed by the delta and b chains.

Its subcellular location is the cell inner membrane. F(1)F(0) ATP synthase produces ATP from ADP in the presence of a proton or sodium gradient. F-type ATPases consist of two structural domains, F(1) containing the extramembraneous catalytic core and F(0) containing the membrane proton channel, linked together by a central stalk and a peripheral stalk. During catalysis, ATP synthesis in the catalytic domain of F(1) is coupled via a rotary mechanism of the central stalk subunits to proton translocation. In terms of biological role, component of the F(0) channel, it forms part of the peripheral stalk, linking F(1) to F(0). The sequence is that of ATP synthase subunit b 2 from Brucella ovis (strain ATCC 25840 / 63/290 / NCTC 10512).